The following is a 2620-amino-acid chain: Highly reducing polyketide synthase tazB (2620 aa).

A disordered region spans residues 1 to 22 (MPFLNGNTTHHEAHSAEPDHGN). The Ketosynthase family 3 (KS3) domain occupies 1–416 (MPFLNGNTTH…GTNAHCILDD (416 aa)). Over residues 9 to 22 (THHEAHSAEPDHGN) the composition is skewed to basic and acidic residues. Residues Cys166, His301, and His340 each act as for beta-ketoacyl synthase activity in the active site. A disordered region spans residues 460–481 (GFNKFDEPRGSDSAGSNANGSH). Positions 470-481 (SDSAGSNANGSH) are enriched in low complexity. The segment at 601-923 (VFTGQGAQYA…PYLATLSRKD (323 aa)) is malonyl-CoA:ACP transacylase (MAT) domain. The N-terminal hotdog fold stretch occupies residues 993-1128 (HDLFGAPVPD…GEVSPDLKKS (136 aa)). The tract at residues 993–1313 (HDLFGAPVPD…LAGIRLSPFK (321 aa)) is dehydratase (DH) domain. The PKS/mFAS DH domain occupies 993 to 1318 (HDLFGAPVPD…LSPFKPESSE (326 aa)). His1025 (proton acceptor; for dehydratase activity) is an active-site residue. A C-terminal hotdog fold region spans residues 1157–1318 (TAPVDFTPVY…LSPFKPESSE (162 aa)). The Proton donor; for dehydratase activity role is filled by Asp1225. Positions 1379-1680 (GLRESREMKD…VDFEASSSIY (302 aa)) are methyltransferase (CMet) domain. The tract at residues 1910-2227 (GIDSLTWVTD…TGKSIGKVTL (318 aa)) is enoyl reductase (ER) domain. Residues 2251–2425 (SFILAGGLGG…HGASVNLGAV (175 aa)) are ketoreductase (KR) domain. A Carrier domain is found at 2539–2620 (EAARIIHKAL…VSLSSFTKFR (82 aa)). O-(pantetheine 4'-phosphoryl)serine is present on Ser2576.

The protein operates within secondary metabolite biosynthesis. Highly reducing polyketide synthase; part of the gene cluster that mediates the biosynthesis of azaterrilone A and other azaphilones, a class of fungal metabolites characterized by a highly oxygenated pyrano-quinone bicyclic core and exhibiting a broad range of bioactivities. The first step of the pathway begins with the non-reducing polyketide synthase tazA that assembles one acetyl-CoA starter unit, five malonyl-CoA units, and catalyzes a series of Claisen condensations, methylation, PT-mediated cyclization, and finally releases the first hexaketide precursor through the R-domain. The tazA product then undergoes reduction on its terminal ketone and the following pyran-ring formation by yet undetermined enzyme(s). Dehydration and enoyl reduction, possibly involving the trans-enoyl reductase tazE leads to the next intermediate. TazD is predicted as an acetyltransferase and might catalyze the acetylation steps leading to the synthesis of azaterrilone A. Azaterrilone A is not the final product of the taz pathway and both the highly reducing polyketide synthase tazB and the dual enzyme tazHJ catalyze late steps of the pathway, leading to the production of the 2 final stereoisomers that contain additional polyketide modification whose structures have still to be determined. The protein is Highly reducing polyketide synthase tazB of Aspergillus terreus (strain NIH 2624 / FGSC A1156).